Consider the following 301-residue polypeptide: Phospholipase A1 (301 aa).

Cys4 and Cys87 are disulfide-bonded. Ser137 acts as the Nucleophile in catalysis. Asp165 functions as the Charge relay system in the catalytic mechanism. Disulfide bonds link Cys176–Cys181 and Cys219–Cys228. The Charge relay system role is filled by His230. 3 cysteine pairs are disulfide-bonded: Cys245–Cys269, Cys246–Cys294, and Cys262–Cys267.

The protein belongs to the AB hydrolase superfamily. Lipase family. Expressed by the venom gland.

The protein localises to the secreted. The catalysed reaction is a 1,2-diacyl-sn-glycero-3-phosphocholine + H2O = a 2-acyl-sn-glycero-3-phosphocholine + a fatty acid + H(+). Its function is as follows. Catalyzes the hydrolysis of phosphatidylcholine with phospholipase A1 activity. May act as an allergen and induce hemolytic activity. The sequence is that of Phospholipase A1 from Vespa crabro (European hornet).